We begin with the raw amino-acid sequence, 161 residues long: Nucleotide-binding protein BMASAVP1_A0673 (161 aa).

The protein belongs to the YajQ family.

In terms of biological role, nucleotide-binding protein. The sequence is that of Nucleotide-binding protein BMASAVP1_A0673 from Burkholderia mallei (strain SAVP1).